Reading from the N-terminus, the 161-residue chain is Lipoprotein signal peptidase (161 aa).

The next 3 membrane-spanning stretches (helical) occupy residues 9–29 (WLWLSLVVITLDLFSKYLVVE), 64–84 (WQKYLFLTLAIIISFILANVL), and 96–113 (MAYALIIGGAIGNAIDRA). Active-site residues include D120 and D138. Residues 133 to 153 (VFNIADVAIVMGAGLLILETF) traverse the membrane as a helical segment.

It belongs to the peptidase A8 family.

The protein localises to the cell inner membrane. It catalyses the reaction Release of signal peptides from bacterial membrane prolipoproteins. Hydrolyzes -Xaa-Yaa-Zaa-|-(S,diacylglyceryl)Cys-, in which Xaa is hydrophobic (preferably Leu), and Yaa (Ala or Ser) and Zaa (Gly or Ala) have small, neutral side chains.. It participates in protein modification; lipoprotein biosynthesis (signal peptide cleavage). Its function is as follows. This protein specifically catalyzes the removal of signal peptides from prolipoproteins. This Haemophilus ducreyi (strain 35000HP / ATCC 700724) protein is Lipoprotein signal peptidase.